The primary structure comprises 139 residues: Ribosome-binding factor A (139 aa).

The tract at residues 112–139 (EARTQGQAAPAPDVEPAPGAAPDDEAEE) is disordered. A compositionally biased stretch (low complexity) spans 119–132 (AAPAPDVEPAPGAA).

This sequence belongs to the RbfA family. In terms of assembly, monomer. Binds 30S ribosomal subunits, but not 50S ribosomal subunits or 70S ribosomes.

The protein resides in the cytoplasm. Its function is as follows. One of several proteins that assist in the late maturation steps of the functional core of the 30S ribosomal subunit. Associates with free 30S ribosomal subunits (but not with 30S subunits that are part of 70S ribosomes or polysomes). Required for efficient processing of 16S rRNA. May interact with the 5'-terminal helix region of 16S rRNA. The protein is Ribosome-binding factor A of Anaeromyxobacter dehalogenans (strain 2CP-1 / ATCC BAA-258).